The sequence spans 217 residues: Uracil-DNA glycosylase (217 aa).

The active-site Proton acceptor is the Asp-62.

Belongs to the uracil-DNA glycosylase (UDG) superfamily. UNG family.

The protein resides in the cytoplasm. It carries out the reaction Hydrolyzes single-stranded DNA or mismatched double-stranded DNA and polynucleotides, releasing free uracil.. Functionally, excises uracil residues from the DNA which can arise as a result of misincorporation of dUMP residues by DNA polymerase or due to deamination of cytosine. This chain is Uracil-DNA glycosylase, found in Streptococcus sanguinis (strain SK36).